The following is a 254-amino-acid chain: Persulfide dioxygenase ETHE1, mitochondrial (254 aa).

The N-terminal 7 residues, 1 to 7 (MAEAVLR), are a transit peptide targeting the mitochondrion. Phosphoserine is present on residues S14 and S19. At K66 the chain carries N6-acetyllysine. Fe cation is bound by residues H79, H135, and D154. Residue K172 is modified to N6-acetyllysine; alternate. K172 carries the post-translational modification N6-succinyllysine; alternate.

It belongs to the metallo-beta-lactamase superfamily. Glyoxalase II family. As to quaternary structure, homodimer. Monomer. Interacts with TST. May interact with RELA. Requires Fe(2+) as cofactor. Ubiquitously expressed.

It is found in the cytoplasm. Its subcellular location is the nucleus. The protein resides in the mitochondrion matrix. The enzyme catalyses S-sulfanylglutathione + O2 + H2O = sulfite + glutathione + 2 H(+). Glutathione increases enzyme activity. Sulfur dioxygenase that plays an essential role in hydrogen sulfide catabolism in the mitochondrial matrix. Hydrogen sulfide (H(2)S) is first oxidized by SQRDL, giving rise to cysteine persulfide residues. ETHE1 consumes molecular oxygen to catalyze the oxidation of the persulfide, once it has been transferred to a thiophilic acceptor, such as glutathione (R-SSH). Plays an important role in metabolic homeostasis in mitochondria by metabolizing hydrogen sulfide and preventing the accumulation of supraphysiological H(2)S levels that have toxic effects, due to the inhibition of cytochrome c oxidase. First described as a protein that can shuttle between the nucleus and the cytoplasm and suppress p53-induced apoptosis by sequestering the transcription factor RELA/NFKB3 in the cytoplasm and preventing its accumulation in the nucleus. This is Persulfide dioxygenase ETHE1, mitochondrial (ETHE1) from Homo sapiens (Human).